The chain runs to 202 residues: MDAVGAAGGGAMLPAAARRGQPPQPPCMTTAPEQQAAAGGAVIWPAAAAAEAKEKMVVDARTMQLFPTRSADGVVVSPAPAPAAAQERRRPEVHVTPSVPATAPTAPLTIVYGGQVLVFEHYTAEAAEKLVQRTQHLLAAAAGGGGGNKNNNVTVVTPPPDEPPMLLPPPQMPAASGVSAGGVMPIARKASLQRFLQKRKQK.

The segment covering M1–A11 has biased composition (gly residues). The segment at M1–A31 is disordered. A compositionally biased stretch (low complexity) spans M12–Q21. The region spanning A101–H136 is the Tify domain. A Jas motif is present at residues P185–K200. Positions A187 to R194 match the Nuclear localization signal motif.

It belongs to the TIFY/JAZ family. Post-translationally, ubiquitinated. Targeted for degradation by the SCF(COI1) E3 ubiquitin ligase-proteasome pathway during jasmonate signaling.

The protein resides in the nucleus. Repressor of jasmonate responses. In Oryza sativa subsp. japonica (Rice), this protein is Protein TIFY 11g.